Consider the following 922-residue polypeptide: Putative ATP-dependent helicase/translocase YwqA (922 aa).

The region spanning 462–625 (LFLRESGFGA…WSIFDFMNKG (164 aa)) is the Helicase ATP-binding domain. 475 to 482 (DDMGLGKT) provides a ligand contact to ATP. The short motif at 576–579 (DEAQ) is the DEAQ box element. Residues 753 to 907 (KLLELMTAIR…QSENWITELS (155 aa)) enclose the Helicase C-terminal domain.

It belongs to the SNF2/RAD54 helicase family. Interacts with the RNA polymerase core.

The chain is Putative ATP-dependent helicase/translocase YwqA (ywqA) from Bacillus subtilis (strain 168).